A 207-amino-acid chain; its full sequence is Outer-membrane lipoprotein LolB (207 aa).

The first 23 residues, 1–23, serve as a signal peptide directing secretion; it reads MPTMNRSRRLALLCLGAPLLLAA. C24 carries N-palmitoyl cysteine lipidation. A lipid anchor (S-diacylglycerol cysteine) is attached at C24. The interval 171-207 is disordered; that stretch reads PSASQAPAPRPRRIDLEREGGPTPLAVKLVIDPEEAP.

This sequence belongs to the LolB family. Monomer.

Its subcellular location is the cell outer membrane. In terms of biological role, plays a critical role in the incorporation of lipoproteins in the outer membrane after they are released by the LolA protein. This chain is Outer-membrane lipoprotein LolB, found in Cupriavidus pinatubonensis (strain JMP 134 / LMG 1197) (Cupriavidus necator (strain JMP 134)).